A 150-amino-acid polypeptide reads, in one-letter code: Transcriptional regulator MraZ (150 aa).

2 SpoVT-AbrB domains span residues 7–55 and 84–127; these read SHAI…PEPE and AALM…SEES.

This sequence belongs to the MraZ family. In terms of assembly, forms oligomers.

The protein localises to the cytoplasm. It localises to the nucleoid. This is Transcriptional regulator MraZ from Marinobacter nauticus (strain ATCC 700491 / DSM 11845 / VT8) (Marinobacter aquaeolei).